Consider the following 689-residue polypeptide: Glycine--tRNA ligase beta subunit (689 aa).

This sequence belongs to the class-II aminoacyl-tRNA synthetase family. In terms of assembly, tetramer of two alpha and two beta subunits.

The protein localises to the cytoplasm. The enzyme catalyses tRNA(Gly) + glycine + ATP = glycyl-tRNA(Gly) + AMP + diphosphate. This is Glycine--tRNA ligase beta subunit from Lacticaseibacillus casei (strain BL23) (Lactobacillus casei).